The primary structure comprises 97 residues: Large ribosomal subunit protein uL23 (97 aa).

Belongs to the universal ribosomal protein uL23 family. As to quaternary structure, part of the 50S ribosomal subunit. Contacts protein L29, and trigger factor when it is bound to the ribosome.

One of the early assembly proteins it binds 23S rRNA. One of the proteins that surrounds the polypeptide exit tunnel on the outside of the ribosome. Forms the main docking site for trigger factor binding to the ribosome. In Sinorhizobium fredii (strain NBRC 101917 / NGR234), this protein is Large ribosomal subunit protein uL23.